The primary structure comprises 1160 residues: MFEWIKNLFGDPNERELNKLWPIVEEINDHYEELQDLTDDELRAKTDAFRAEIREAVADIEARQNEIREKLKRAPGLEGPVGGDGQVTEMEGEALSLDERDALYDEFDELEEEWQDVVEDTLWELLPEAFAVVKETCRRMLGETWMAGGSKIEWDMVPYDVQILGAIVLHQGRIAEMKTGEGKTLAAVMPLYLNALTGRGCQLVTVNDYLAERDTEWMGPIYEFHGLTVDCVNRYDPHTEGRKEAYEADITYGTNNEIGFDYLRDNSFVVRPEQLMQRGHHYAIIDEIDSVLIDEARTPLIISGPVPDQENDEYRELRDPVEQLVEAQRRLVRSFVKETRELLEEKEEAEEEGDSRRAQELEDEAGLSLFRASRGYPKNRQLQKLLNEPGMERLRQKTENFYLQENAKRMPFVDQELYFSVDEKKQTVEMTEKGQEYIAKIMDESEDLFVLPVVGDKIAEVEDEYQEKVDELEEALQEEDLSQEKRENKYMNDKRELEKELQETKREIYNTYSERAERVHAIEQLLKAFTLYERDTEYIVQEGKVQIVDEHTGRVMEGRRYSEGLHEALEAKEEVEIQNATQTYASVTLQNYFRMYDKLSGMTGTAETEAEEFNEIYDLDVVVVPTHEPVRRDDKDDLVFQTKREKYNAIVEKVKEYNKRGQPVLVGSASVEVSETISRTLEREGIPHNVLNAKQDRAKEEAQIVAEAGQKGSVTIATNMAGRGTDIQITDEVRELGGLAILGSERHESRRIDLQLRGRAGRQGDPGESQFYVSLEDDLMRLFGSDRVAKVMDSMGIEEGEVITHPWINKSIKRAQSKVEQNNFAIRKRQLEYDDVLNSQREVIYKRRREALTGERFHGQVLNMLYEYIEALVERHYGQGNIAGLREDLLRTLAFDLEMDREEFVQLGEDGVVDHVYDVATDYYRQKRANIAQPFHQTLRDLKQERGDDMIEQVFVDFTDGQDAIRAVADVDEALETNGEEINEALERTAMLQTIDEKWTDHLRELDELKEGIGLRSFGRKDPVVEYKMEAFDLFSDMMAEIGQEVVSLVFRAGPVVDDEVQTEGQGPRRRLSQRNAQTQHDSAQPDYSIDADGDGGGGQEGEAAERDPTVEEKQPVTVADEPGRNEYVTVRNNANGETTEMKWKYAKKKINQGGWSLVS.

ATP is bound by residues Gln-162 and 180 to 184 (GEGKT). A disordered region spans residues 342 to 362 (LLEEKEEAEEEGDSRRAQELE). The span at 344–353 (EEKEEAEEEG) shows a compositional bias: acidic residues. An ATP-binding site is contributed by Asp-726. Positions 1060 to 1134 (EVQTEGQGPR…RNEYVTVRNN (75 aa)) are disordered. Positions 1074–1083 (QRNAQTQHDS) are enriched in polar residues. The span at 1104–1115 (AAERDPTVEEKQ) shows a compositional bias: basic and acidic residues.

The protein belongs to the SecA family. As to quaternary structure, monomer and homodimer. Part of the essential Sec protein translocation apparatus which comprises SecA, SecYEG and auxiliary proteins SecDF. Other proteins may also be involved.

Its subcellular location is the cell inner membrane. It is found in the cytoplasm. The enzyme catalyses ATP + H2O + cellular proteinSide 1 = ADP + phosphate + cellular proteinSide 2.. Its function is as follows. Part of the Sec protein translocase complex. Interacts with the SecYEG preprotein conducting channel. Has a central role in coupling the hydrolysis of ATP to the transfer of proteins into and across the cell membrane, serving as an ATP-driven molecular motor driving the stepwise translocation of polypeptide chains across the membrane. The protein is Protein translocase subunit SecA of Salinibacter ruber (strain DSM 13855 / M31).